The primary structure comprises 887 residues: Protein SIP5 (887 aa).

Disordered regions lie at residues Met-1–Glu-77, Pro-168–Lys-226, Ser-381–Val-415, Ser-463–Arg-521, Ala-542–Gly-608, Ser-623–Glu-746, and Arg-778–Val-854. The span at Asp-44–Thr-53 shows a compositional bias: gly residues. Residues Pro-61–Glu-77 are compositionally biased toward basic and acidic residues. Polar residues predominate over residues Arg-193–Gly-207. A compositionally biased stretch (low complexity) spans Ser-381 to Ser-390. Polar residues-rich tracts occupy residues Pro-391–Val-415 and Ser-495–Asp-504. 2 stretches are compositionally biased toward basic and acidic residues: residues Gln-505–Arg-521 and Glu-543–Ala-568. Over residues Gly-581 to Gly-600 the composition is skewed to low complexity. Over residues Asn-634–Asp-643 the composition is skewed to basic and acidic residues. The segment covering Arg-686 to His-711 has biased composition (polar residues). A compositionally biased stretch (low complexity) spans Arg-716–Gly-727. The segment covering Glu-798 to Pro-813 has biased composition (basic and acidic residues). The span at Ile-836 to Val-854 shows a compositional bias: polar residues.

This sequence belongs to the SIP5 family.

The protein resides in the cytoplasm. In terms of biological role, may negatively regulate the SNF1 kinase. The polypeptide is Protein SIP5 (SIP5) (Chaetomium globosum (strain ATCC 6205 / CBS 148.51 / DSM 1962 / NBRC 6347 / NRRL 1970) (Soil fungus)).